The primary structure comprises 747 residues: Cysteine--tRNA ligase, cytoplasmic (747 aa).

The tract at residues 1–26 (MTESWEQGKGRRTQPPWSAPNTNEQP) is disordered. The segment covering 15 to 25 (PPWSAPNTNEQ) has biased composition (polar residues). C54 lines the Zn(2+) pocket. An L-cysteine-binding site is contributed by G55. Residues 56 to 66 (PTVYDASHMGH) carry the 'HIGH' region motif. T95 is a binding site for L-cysteine. Positions 100 to 103 (KIIK) match the 'KIIK' region motif. 3 residues coordinate Zn(2+): C347, H372, and E376. H372 is a binding site for L-cysteine. A 'KMSKS' region motif is present at residues 405-409 (KMSKS). K408 lines the ATP pocket. A compositionally biased stretch (basic and acidic residues) spans 651–683 (EEKRKAEEEKQRKKEEAARKKQQQEAAKLEKMK). Disordered regions lie at residues 651–685 (EEKR…MKIS) and 700–721 (FDES…GQTK).

Belongs to the class-I aminoacyl-tRNA synthetase family. In terms of assembly, homodimer. Requires Zn(2+) as cofactor.

The protein localises to the cytoplasm. It carries out the reaction tRNA(Cys) + L-cysteine + ATP = L-cysteinyl-tRNA(Cys) + AMP + diphosphate. Catalyzes the ATP-dependent ligation of cysteine to tRNA(Cys). The chain is Cysteine--tRNA ligase, cytoplasmic (cars1) from Xenopus laevis (African clawed frog).